We begin with the raw amino-acid sequence, 142 residues long: Large ribosomal subunit protein uL13 (142 aa).

Belongs to the universal ribosomal protein uL13 family. As to quaternary structure, part of the 50S ribosomal subunit.

Its function is as follows. This protein is one of the early assembly proteins of the 50S ribosomal subunit, although it is not seen to bind rRNA by itself. It is important during the early stages of 50S assembly. In Syntrophotalea carbinolica (strain DSM 2380 / NBRC 103641 / GraBd1) (Pelobacter carbinolicus), this protein is Large ribosomal subunit protein uL13.